A 253-amino-acid chain; its full sequence is Toxin PezT (253 aa).

39 to 46 contacts ATP; sequence GQSGAGKT. The active-site Proton acceptor is the Asp66.

It belongs to the zeta toxin family. In terms of assembly, forms a PezA(2)PezT(2) heterotetramer. The heterotetramer is much more stable than either of the proteins alone, and a specific mechanism may be necessary to liberate the toxin.

It carries out the reaction UDP-N-acetyl-alpha-D-glucosamine + ATP = UDP-N-acetyl-alpha-D-glucosamine 3'-phosphate + ADP + H(+). Functionally, toxic component of a type II toxin-antitoxin (TA) system. Phosphorylates UDP-N-acetyl-D-glucosamine (UNAG) on the 3'-hydroxyl group of the N-acetyl-D-glucosamine moiety, yielding UNAG-3P. UNAG-3P inhibits MurA, the first committed step in cell wall synthesis, which is then blocked. Upon expression in E.coli results in decreased cell growth and viability, followed 3 hours later by growth restoration; the toxic effect and phosphorylation of UNAG are neutralized by coexpression with cognate antitoxin PezA. A mutant lacking the last 11 residues is stably maintained in E.coli, unlike the wild-type which undergoes spontaneous mutation. Expression of the deletion mutant in rapidly growing liquid cultures leads to cell bulging, permeabilization and massive lysis by 1 hour. Cells that survive are not able to undergo cytokinesis. Expression in slowly growing cells leads to bulging but not lysis. Acts as a corepressor of its own operon with PezA; it is not clear if it binds DNA alone. The chain is Toxin PezT (pezT) from Streptococcus pneumoniae serotype 4 (strain ATCC BAA-334 / TIGR4).